Consider the following 223-residue polypeptide: Ribose-5-phosphate isomerase A (223 aa).

Substrate is bound by residues 28–31 (TGST), 81–84 (DGAD), and 94–97 (KGGG). Glutamate 103 serves as the catalytic Proton acceptor. Substrate is bound at residue lysine 121.

The protein belongs to the ribose 5-phosphate isomerase family. In terms of assembly, homodimer.

The catalysed reaction is aldehydo-D-ribose 5-phosphate = D-ribulose 5-phosphate. The protein operates within carbohydrate degradation; pentose phosphate pathway; D-ribose 5-phosphate from D-ribulose 5-phosphate (non-oxidative stage): step 1/1. In terms of biological role, catalyzes the reversible conversion of ribose-5-phosphate to ribulose 5-phosphate. In Herminiimonas arsenicoxydans, this protein is Ribose-5-phosphate isomerase A.